Consider the following 210-residue polypeptide: Cytochrome c biogenesis ATP-binding export protein CcmA (210 aa).

Positions 3-209 constitute an ABC transporter domain; the sequence is LTVTNLACAR…PADDPFAGVT (207 aa). Residue 35 to 42 participates in ATP binding; sequence GPNGIGKT.

It belongs to the ABC transporter superfamily. CcmA exporter (TC 3.A.1.107) family. As to quaternary structure, the complex is composed of two ATP-binding proteins (CcmA) and two transmembrane proteins (CcmB).

The protein localises to the cell inner membrane. The catalysed reaction is heme b(in) + ATP + H2O = heme b(out) + ADP + phosphate + H(+). Functionally, part of the ABC transporter complex CcmAB involved in the biogenesis of c-type cytochromes; once thought to export heme, this seems not to be the case, but its exact role is uncertain. Responsible for energy coupling to the transport system. This is Cytochrome c biogenesis ATP-binding export protein CcmA from Cereibacter sphaeroides (strain ATCC 17023 / DSM 158 / JCM 6121 / CCUG 31486 / LMG 2827 / NBRC 12203 / NCIMB 8253 / ATH 2.4.1.) (Rhodobacter sphaeroides).